A 207-amino-acid polypeptide reads, in one-letter code: Urease accessory protein UreG (207 aa).

G13–T20 serves as a coordination point for GTP.

Belongs to the SIMIBI class G3E GTPase family. UreG subfamily. As to quaternary structure, homodimer. UreD, UreF and UreG form a complex that acts as a GTP-hydrolysis-dependent molecular chaperone, activating the urease apoprotein by helping to assemble the nickel containing metallocenter of UreC. The UreE protein probably delivers the nickel.

It is found in the cytoplasm. Facilitates the functional incorporation of the urease nickel metallocenter. This process requires GTP hydrolysis, probably effectuated by UreG. The polypeptide is Urease accessory protein UreG (Azoarcus sp. (strain BH72)).